Consider the following 569-residue polypeptide: 4-hydroxy-7-methoxy-3-oxo-3,4-dihydro-2H-1,4-benzoxazin-2-yl glucoside beta-D-glucosidase 1b, chloroplastic (569 aa).

The N-terminal 50 residues, 1–50 (MALLAAATLNPTTHLSLRSRAGRNSENLWLRSTASSQKSKGRFCNLTIRA), are a transit peptide targeting the chloroplast. A beta-D-glucoside contacts are provided by residues glutamine 92, histidine 194, and 239–240 (NE). The active-site Proton donor is the glutamate 240. Residues cysteine 259 and cysteine 265 are joined by a disulfide bond. A beta-D-glucoside is bound by residues tyrosine 383, glutamate 456, tryptophan 504, 511 to 512 (EW), and phenylalanine 520. Residue glutamate 456 is the Nucleophile of the active site.

It belongs to the glycosyl hydrolase 1 family. Homo- and heterohexamers. Expressed in young seedlings early after germination.

The protein resides in the plastid. It is found in the chloroplast. It catalyses the reaction Hydrolysis of terminal, non-reducing beta-D-glucosyl residues with release of beta-D-glucose.. The catalysed reaction is DIMBOA beta-D-glucoside + H2O = DIMBOA + D-glucose. It carries out the reaction DIBOA beta-D-glucoside + H2O = DIBOA + D-glucose. In terms of biological role, acts in defense of young plant parts against pests via the production of hydroxamic acids from hydroxamic acid glucosides. Enzymatic activity is highly correlated with plant growth. The preferred substrate is DIMBOA-beta-D-glucoside. The protein is 4-hydroxy-7-methoxy-3-oxo-3,4-dihydro-2H-1,4-benzoxazin-2-yl glucoside beta-D-glucosidase 1b, chloroplastic (GLU1B) of Triticum aestivum (Wheat).